A 326-amino-acid chain; its full sequence is Glyoxylate/hydroxypyruvate reductase B (326 aa).

Residues arginine 237 and glutamate 266 contribute to the active site. Histidine 285 functions as the Proton donor in the catalytic mechanism.

The protein belongs to the D-isomer specific 2-hydroxyacid dehydrogenase family. GhrB subfamily. In terms of assembly, homodimer.

The protein localises to the cytoplasm. It catalyses the reaction glycolate + NADP(+) = glyoxylate + NADPH + H(+). The catalysed reaction is (R)-glycerate + NAD(+) = 3-hydroxypyruvate + NADH + H(+). The enzyme catalyses (R)-glycerate + NADP(+) = 3-hydroxypyruvate + NADPH + H(+). In terms of biological role, catalyzes the NADPH-dependent reduction of glyoxylate and hydroxypyruvate into glycolate and glycerate, respectively. The polypeptide is Glyoxylate/hydroxypyruvate reductase B (Yersinia enterocolitica serotype O:8 / biotype 1B (strain NCTC 13174 / 8081)).